A 399-amino-acid polypeptide reads, in one-letter code: UDP-N-acetylglucosamine--N-acetylmuramyl-(pentapeptide) pyrophosphoryl-undecaprenol N-acetylglucosamine transferase (399 aa).

Positions 1–31 are disordered; that stretch reads MTSRFGHSQHPRRGRSARARAGRREGVQSNF. Residues 7–21 are compositionally biased toward basic residues; the sequence is HSQHPRRGRSARARA. UDP-N-acetyl-alpha-D-glucosamine-binding positions include 58 to 60, asparagine 170, arginine 206, serine 234, isoleucine 288, and glutamine 333; that span reads TGG.

Belongs to the glycosyltransferase 28 family. MurG subfamily.

The protein localises to the cell inner membrane. It catalyses the reaction di-trans,octa-cis-undecaprenyl diphospho-N-acetyl-alpha-D-muramoyl-L-alanyl-D-glutamyl-meso-2,6-diaminopimeloyl-D-alanyl-D-alanine + UDP-N-acetyl-alpha-D-glucosamine = di-trans,octa-cis-undecaprenyl diphospho-[N-acetyl-alpha-D-glucosaminyl-(1-&gt;4)]-N-acetyl-alpha-D-muramoyl-L-alanyl-D-glutamyl-meso-2,6-diaminopimeloyl-D-alanyl-D-alanine + UDP + H(+). Its pathway is cell wall biogenesis; peptidoglycan biosynthesis. Cell wall formation. Catalyzes the transfer of a GlcNAc subunit on undecaprenyl-pyrophosphoryl-MurNAc-pentapeptide (lipid intermediate I) to form undecaprenyl-pyrophosphoryl-MurNAc-(pentapeptide)GlcNAc (lipid intermediate II). This Acidovorax sp. (strain JS42) protein is UDP-N-acetylglucosamine--N-acetylmuramyl-(pentapeptide) pyrophosphoryl-undecaprenol N-acetylglucosamine transferase.